Here is a 2067-residue protein sequence, read N- to C-terminus: Separin (2067 aa).

Disordered regions lie at residues 51 to 91, 140 to 167, 1316 to 1363, and 1449 to 1478; these read RTAR…AQDV, KKDASPTKRGTTTKGRVKTSQPDLTDNE, DLEE…SVEA, and LEPKAASESSSKSATRKTRAPTRGTRTKAQ. Residues 55–86 are compositionally biased toward low complexity; sequence GTKATATNATASSRAKTTRTKSTSTSTTRTKT. Composition is skewed to low complexity over residues 1333–1354 and 1449–1461; these read TRQPATTATRRTRSATTSARST and LEPKAASESSSKS. The Peptidase C50 domain occupies 1880 to 1975; the sequence is RRNGTYILNP…SGTLTEAGEY (96 aa). The active site involves Cys1964.

The protein localises to the nucleus. It catalyses the reaction All bonds known to be hydrolyzed by this endopeptidase have arginine in P1 and an acidic residue in P4. P6 is often occupied by an acidic residue or by a hydroxy-amino-acid residue, the phosphorylation of which enhances cleavage.. In terms of biological role, required for nuclear division. Could function in the mitotic spindle. The protein is Separin (bimB) of Emericella nidulans (strain FGSC A4 / ATCC 38163 / CBS 112.46 / NRRL 194 / M139) (Aspergillus nidulans).